The primary structure comprises 200 residues: Pre-mRNA cleavage factor Im 25 kDa subunit 2 (200 aa).

The Nudix hydrolase domain occupies 45-172 (GMRTSVEGIL…KLLAVPLFEL (128 aa)). The segment at 72 to 74 (TFC) is interaction with RNA. Residues 79 to 100 (GRLKPGENEADGLKRKLTSKLG) carry the Nudix box motif.

Belongs to the Nudix hydrolase family. CPSF5 subfamily. In terms of assembly, homodimer. Component of the cleavage factor Im (CFIm) complex. Forms a complex with cleavage and polyadenylation specificity factor (CPSF) subunits FIPS5, PAPS4 and CPSF30.

It localises to the nucleus. Component of the cleavage factor Im (CFIm) complex that plays a key role in pre-mRNA 3'-processing. Involved in association with CPSF6 or CPSF7 in pre-MRNA 3'-end poly(A) site cleavage and poly(A) addition. NUDT21/CPSF5 binds to cleavage and polyadenylation RNA substrates. The homodimer mediates simultaneous sequence-specific recognition of two 5'-UGUA-3' elements within the pre-mRNA. Binds to, but does not hydrolyze mono- and di-adenosine nucleotides. May have a role in mRNA export. This Arabidopsis thaliana (Mouse-ear cress) protein is Pre-mRNA cleavage factor Im 25 kDa subunit 2.